Consider the following 211-residue polypeptide: Adenylyl-sulfate kinase (211 aa).

Residue 36–43 participates in ATP binding; it reads GLSGSGKS. Serine 110 acts as the Phosphoserine intermediate in catalysis.

The protein belongs to the APS kinase family.

It catalyses the reaction adenosine 5'-phosphosulfate + ATP = 3'-phosphoadenylyl sulfate + ADP + H(+). It participates in sulfur metabolism; hydrogen sulfide biosynthesis; sulfite from sulfate: step 2/3. Catalyzes the synthesis of activated sulfate. This chain is Adenylyl-sulfate kinase (cysC), found in Buchnera aphidicola subsp. Schizaphis graminum (strain Sg).